Reading from the N-terminus, the 192-residue chain is Elongation factor P (192 aa).

The protein belongs to the elongation factor P family.

The protein resides in the cytoplasm. It functions in the pathway protein biosynthesis; polypeptide chain elongation. In terms of biological role, involved in peptide bond synthesis. Stimulates efficient translation and peptide-bond synthesis on native or reconstituted 70S ribosomes in vitro. Probably functions indirectly by altering the affinity of the ribosome for aminoacyl-tRNA, thus increasing their reactivity as acceptors for peptidyl transferase. The chain is Elongation factor P from Borrelia turicatae (strain 91E135).